The primary structure comprises 435 residues: Monodictyphenone cluster transcription factor (435 aa).

Residues 23–50 (CHACALSKLKCSQDKPTCSRCVKRGTAC) constitute a DNA-binding region (zn(2)-C6 fungal-type). The tract at residues 117-147 (QYHQRTPSYPESIPSLLSSTGPGTSATSPLT) is disordered. Residues 130 to 147 (PSLLSSTGPGTSATSPLT) are compositionally biased toward low complexity.

The protein resides in the nucleus. Its function is as follows. Transcription factor that regulates the expression of the gene cluster that mediates the biosynthesis of monodictyphenone, a prenyl xanthone derivative. In Emericella nidulans (strain FGSC A4 / ATCC 38163 / CBS 112.46 / NRRL 194 / M139) (Aspergillus nidulans), this protein is Monodictyphenone cluster transcription factor.